The primary structure comprises 284 residues: Release factor glutamine methyltransferase (284 aa).

Residues 121 to 125 (GTGTG), aspartate 144, tryptophan 172, and asparagine 188 contribute to the S-adenosyl-L-methionine site. 188 to 191 (NPPY) lines the substrate pocket.

This sequence belongs to the protein N5-glutamine methyltransferase family. PrmC subfamily.

It catalyses the reaction L-glutaminyl-[peptide chain release factor] + S-adenosyl-L-methionine = N(5)-methyl-L-glutaminyl-[peptide chain release factor] + S-adenosyl-L-homocysteine + H(+). Functionally, methylates the class 1 translation termination release factors RF1/PrfA and RF2/PrfB on the glutamine residue of the universally conserved GGQ motif. The chain is Release factor glutamine methyltransferase from Aliivibrio fischeri (strain ATCC 700601 / ES114) (Vibrio fischeri).